Here is a 365-residue protein sequence, read N- to C-terminus: Histidinol-phosphate aminotransferase (365 aa).

Lys-221 is subject to N6-(pyridoxal phosphate)lysine.

It belongs to the class-II pyridoxal-phosphate-dependent aminotransferase family. Histidinol-phosphate aminotransferase subfamily. In terms of assembly, homodimer. Pyridoxal 5'-phosphate serves as cofactor.

The catalysed reaction is L-histidinol phosphate + 2-oxoglutarate = 3-(imidazol-4-yl)-2-oxopropyl phosphate + L-glutamate. It participates in amino-acid biosynthesis; L-histidine biosynthesis; L-histidine from 5-phospho-alpha-D-ribose 1-diphosphate: step 7/9. In Nitrobacter hamburgensis (strain DSM 10229 / NCIMB 13809 / X14), this protein is Histidinol-phosphate aminotransferase.